A 481-amino-acid chain; its full sequence is 4-hydroxyphenylacetate 3-monooxygenase oxygenase component (481 aa).

Substrate-binding positions include 100 to 104 (RSPDY) and H142. Residues 142–144 (HAL), 148–151 (QVNR), and T185 contribute to the FAD site. 197-198 (ST) provides a ligand contact to substrate. 444 to 447 (DPVR) is a binding site for FAD.

It belongs to the FADH(2)-utilizing monooxygenase family. Homotetramer consisting of a dimer of dimers. 4-HPA 3-monooxygenase consists of a reductase component HpaC and an oxygenase component HpaB.

It catalyses the reaction 4-hydroxyphenylacetate + FADH2 + O2 = 3,4-dihydroxyphenylacetate + FAD + H2O + H(+). Its pathway is aromatic compound metabolism; 4-hydroxyphenylacetate degradation; pyruvate and succinate semialdehyde from 4-hydroxyphenylacetate: step 1/7. Functionally, utilizes FADH(2) supplied by HpaC, to catalyze the hydroxylation of 4-hydroxyphenylacetic acid, leading to the production of 3,4-dihydroxyphenylacetic acid (DHPA). In Thermus thermophilus (strain ATCC 27634 / DSM 579 / HB8), this protein is 4-hydroxyphenylacetate 3-monooxygenase oxygenase component.